Reading from the N-terminus, the 436-residue chain is ATP-dependent protease ATPase subunit HslU (436 aa).

ATP contacts are provided by residues Ile-19, 61–66, Asp-249, Glu-314, and Arg-386; that span reads GVGKTE.

The protein belongs to the ClpX chaperone family. HslU subfamily. A double ring-shaped homohexamer of HslV is capped on each side by a ring-shaped HslU homohexamer. The assembly of the HslU/HslV complex is dependent on binding of ATP.

The protein resides in the cytoplasm. ATPase subunit of a proteasome-like degradation complex; this subunit has chaperone activity. The binding of ATP and its subsequent hydrolysis by HslU are essential for unfolding of protein substrates subsequently hydrolyzed by HslV. HslU recognizes the N-terminal part of its protein substrates and unfolds these before they are guided to HslV for hydrolysis. In Bartonella bacilliformis (strain ATCC 35685 / KC583 / Herrer 020/F12,63), this protein is ATP-dependent protease ATPase subunit HslU.